The sequence spans 330 residues: Apolipoprotein E (330 aa).

A signal peptide spans 1–18 (MKVLWAALVVALLAGCWA). The disordered stretch occupies residues 21–43 (EPESPLQGKPEPELEPELEPKRE). Repeat copies occupy residues 96-117 (TLME…EQLG), 118-139 (PMAS…ARLR), 140-161 (SDME…AMLG), 162-183 (QSTE…KRVL), 184-205 (RDAE…EGAE), 206-227 (RSVS…TRHA), and 247-268 (GRLE…EQME). Positions 96–268 (TLMEETMKEI…HLDEVREQME (173 aa)) are 7 X 22 AA approximate tandem repeats. At Met-159 the chain carries Methionine sulfoxide. A Phosphoserine modification is found at Ser-163. Residues 174–184 (HMRKLRKRVLR) form an LDL and other lipoprotein receptors binding region. 178 to 181 (LRKR) contacts heparin. The segment at 226-303 (HANLATQPLR…SWFEPLVEDM (78 aa)) is lipid-binding and lipoprotein association. 242 to 249 (GQQLRGRL) lines the heparin pocket. A homooligomerization region spans residues 279–330 (NQMRQQVEAFQARLKSWFEPLVEDMQRQWAGLVEKVQVAVGTSPTTPPLETK). Residues 291–303 (RLKSWFEPLVEDM) are specificity for association with VLDL.

It belongs to the apolipoprotein A1/A4/E family. In terms of assembly, homotetramer. May interact with ABCA1; functionally associated with ABCA1 in the biogenesis of HDLs. May interact with APP/A4 amyloid-beta peptide; the interaction is extremely stable in vitro but its physiological significance is unclear. May interact with MAPT. May interact with MAP2. In the cerebrospinal fluid, interacts with secreted SORL1. Interacts with PMEL; this allows the loading of PMEL luminal fragment on ILVs to induce fibril nucleation. APOE exists as multiple glycosylated and sialylated glycoforms within cells and in plasma. The extent of glycosylation and sialylation are tissue and context specific. Post-translationally, glycated in plasma VLDL. In terms of processing, phosphorylated by FAM20C in the extracellular medium.

Its subcellular location is the secreted. The protein localises to the extracellular space. It localises to the extracellular matrix. It is found in the extracellular vesicle. The protein resides in the endosome. Its subcellular location is the multivesicular body. In terms of biological role, APOE is an apolipoprotein, a protein associating with lipid particles, that mainly functions in lipoprotein-mediated lipid transport between organs via the plasma and interstitial fluids. APOE is a core component of plasma lipoproteins and is involved in their production, conversion and clearance. Apolipoproteins are amphipathic molecules that interact both with lipids of the lipoprotein particle core and the aqueous environment of the plasma. As such, APOE associates with chylomicrons, chylomicron remnants, very low density lipoproteins (VLDL) and intermediate density lipoproteins (IDL) but shows a preferential binding to high-density lipoproteins (HDL). It also binds a wide range of cellular receptors including the LDL receptor/LDLR, the LDL receptor-related proteins LRP1, LRP2 and LRP8 and the very low-density lipoprotein receptor/VLDLR that mediate the cellular uptake of the APOE-containing lipoprotein particles. Finally, APOE also has a heparin-binding activity and binds heparan-sulfate proteoglycans on the surface of cells, a property that supports the capture and the receptor-mediated uptake of APOE-containing lipoproteins by cells. A main function of APOE is to mediate lipoprotein clearance through the uptake of chylomicrons, VLDLs, and HDLs by hepatocytes. APOE is also involved in the biosynthesis by the liver of VLDLs as well as their uptake by peripheral tissues ensuring the delivery of triglycerides and energy storage in muscle, heart and adipose tissues. By participating in the lipoprotein-mediated distribution of lipids among tissues, APOE plays a critical role in plasma and tissues lipid homeostasis. APOE is also involved in two steps of reverse cholesterol transport, the HDLs-mediated transport of cholesterol from peripheral tissues to the liver, and thereby plays an important role in cholesterol homeostasis. First, it is functionally associated with ABCA1 in the biogenesis of HDLs in tissues. Second, it is enriched in circulating HDLs and mediates their uptake by hepatocytes. APOE also plays an important role in lipid transport in the central nervous system, regulating neuron survival and sprouting. This chain is Apolipoprotein E (APOE), found in Neomonachus schauinslandi (Hawaiian monk seal).